Consider the following 238-residue polypeptide: Purine nucleoside phosphorylase DeoD-type (238 aa).

His-4 lines the a purine D-ribonucleoside pocket. Phosphate is bound by residues Gly-20, Arg-24, Arg-43, and 87–90; that span reads RVGS. A purine D-ribonucleoside contacts are provided by residues 179–181 and 203–204; these read EME and SD. Residue Asp-204 is the Proton donor of the active site.

Belongs to the PNP/UDP phosphorylase family. As to quaternary structure, homohexamer; trimer of homodimers.

It catalyses the reaction a purine D-ribonucleoside + phosphate = a purine nucleobase + alpha-D-ribose 1-phosphate. The catalysed reaction is a purine 2'-deoxy-D-ribonucleoside + phosphate = a purine nucleobase + 2-deoxy-alpha-D-ribose 1-phosphate. Its function is as follows. Catalyzes the reversible phosphorolytic breakdown of the N-glycosidic bond in the beta-(deoxy)ribonucleoside molecules, with the formation of the corresponding free purine bases and pentose-1-phosphate. This chain is Purine nucleoside phosphorylase DeoD-type, found in Haemophilus influenzae (strain PittGG).